The primary structure comprises 394 residues: Tryptophan synthase beta chain (394 aa).

At lysine 84 the chain carries N6-(pyridoxal phosphate)lysine.

Belongs to the TrpB family. As to quaternary structure, tetramer of two alpha and two beta chains. It depends on pyridoxal 5'-phosphate as a cofactor.

It carries out the reaction (1S,2R)-1-C-(indol-3-yl)glycerol 3-phosphate + L-serine = D-glyceraldehyde 3-phosphate + L-tryptophan + H2O. Its pathway is amino-acid biosynthesis; L-tryptophan biosynthesis; L-tryptophan from chorismate: step 5/5. The beta subunit is responsible for the synthesis of L-tryptophan from indole and L-serine. The protein is Tryptophan synthase beta chain of Clostridium acetobutylicum (strain ATCC 824 / DSM 792 / JCM 1419 / IAM 19013 / LMG 5710 / NBRC 13948 / NRRL B-527 / VKM B-1787 / 2291 / W).